The following is a 157-amino-acid chain: uncharacterized protein (157 aa).

Helical transmembrane passes span 29–49, 52–72, 93–113, and 117–137; these read LLII…PAYF, VLHV…GFGI, LGSV…RTWL, and NEMF…TITA.

Its subcellular location is the cell membrane. This is an uncharacterized protein from Bacillus subtilis (strain 168).